A 78-amino-acid chain; its full sequence is Small ribosomal subunit protein bS16c (78 aa).

The protein belongs to the bacterial ribosomal protein bS16 family.

It is found in the plastid. The protein localises to the chloroplast. This Daucus carota (Wild carrot) protein is Small ribosomal subunit protein bS16c.